A 2120-amino-acid chain; its full sequence is Separin (2120 aa).

A Phosphoserine modification is found at Ser-1126. The segment at 1299 to 1355 (IKSVPGSEPSKTQGQKRSGRGRQKLASAPLRLNNTSQKGLEGRGLPCTPKPPDRIRQ) is disordered. 2 positions are modified to phosphoserine: Ser-1396 and Ser-1399. 2 disordered regions span residues 1412-1485 (AEEP…PEIM) and 1507-1561 (GSDG…PRLR). Composition is skewed to basic residues over residues 1418–1432 (RGTA…RKGL) and 1454–1463 (RSRRAKKVAS). Over residues 1464–1473 (RHCEERRPQR) the composition is skewed to basic and acidic residues. Position 1508 is a phosphoserine (Ser-1508). Residues 1548-1558 (PDKESDKDLGP) show a composition bias toward basic and acidic residues. The Peptidase C50 domain occupies 1945-2040 (PRSTFYVLNP…SAALAVRGNL (96 aa)). Cys-2029 is a catalytic residue.

As to quaternary structure, interacts with PTTG1. Interacts with RAD21. In terms of processing, autocleaves. This function, which is not essential for its protease activity, is unknown. Post-translationally, phosphorylated by CDK1. There are 8 Ser/Thr phosphorylation sites. Among them, Ser-1126 phosphorylation is the major site, which conducts to the enzyme inactivation.

Its subcellular location is the cytoplasm. The protein localises to the nucleus. The catalysed reaction is All bonds known to be hydrolyzed by this endopeptidase have arginine in P1 and an acidic residue in P4. P6 is often occupied by an acidic residue or by a hydroxy-amino-acid residue, the phosphorylation of which enhances cleavage.. With respect to regulation, regulated by at least two independent mechanisms. First, it is inactivated via its interaction with securin/PTTG1, which probably covers its active site. The association with PTTG1 is not only inhibitory, since PTTG1 is also required for activating it, the enzyme being inactive in cells in which PTTG1 is absent. PTTG1 degradation at anaphase, liberates it and triggers RAD21 cleavage. Second, phosphorylation at Ser-1126 inactivates it. The complete phosphorylation during mitosis, is removed when cells undergo anaphase. Activation of the enzyme at the metaphase-anaphase transition probably requires the removal of both securin and inhibitory phosphate. Its function is as follows. Caspase-like protease, which plays a central role in the chromosome segregation by cleaving the SCC1/RAD21 subunit of the cohesin complex at the onset of anaphase. During most of the cell cycle, it is inactivated by different mechanisms. This chain is Separin (ESPL1), found in Homo sapiens (Human).